Reading from the N-terminus, the 264-residue chain is Large ribosomal subunit protein uL2 (264 aa).

It belongs to the universal ribosomal protein uL2 family.

It is found in the cytoplasm. This Tetrahymena thermophila (strain SB210) protein is Large ribosomal subunit protein uL2 (RPL8).